A 428-amino-acid polypeptide reads, in one-letter code: Enolase (428 aa).

(2R)-2-phosphoglycerate is bound at residue Gln163. Catalysis depends on Glu205, which acts as the Proton donor. Asp242, Glu283, and Asp310 together coordinate Mg(2+). Positions 335, 364, 365, and 386 each coordinate (2R)-2-phosphoglycerate. The active-site Proton acceptor is the Lys335.

This sequence belongs to the enolase family. Mg(2+) is required as a cofactor.

It is found in the cytoplasm. Its subcellular location is the secreted. It localises to the cell surface. It carries out the reaction (2R)-2-phosphoglycerate = phosphoenolpyruvate + H2O. Its pathway is carbohydrate degradation; glycolysis; pyruvate from D-glyceraldehyde 3-phosphate: step 4/5. Catalyzes the reversible conversion of 2-phosphoglycerate (2-PG) into phosphoenolpyruvate (PEP). It is essential for the degradation of carbohydrates via glycolysis. The sequence is that of Enolase from Streptomyces avermitilis (strain ATCC 31267 / DSM 46492 / JCM 5070 / NBRC 14893 / NCIMB 12804 / NRRL 8165 / MA-4680).